We begin with the raw amino-acid sequence, 214 residues long: Coiled-coil domain-containing protein 169 (214 aa).

Residues 29–154 are a coiled coil; it reads DAVQLSIFEL…NERRTYLAEM (126 aa). A compositionally biased stretch (polar residues) spans 155–170; the sequence is SQGSGLHQVSKRQQVD. Residues 155-214 form a disordered region; it reads SQGSGLHQVSKRQQVDQLPRMQENLVKTGRYNPAKQKTVSAKRGPVKKITRPNHLPELHP.

This sequence belongs to the CCDC169 family.

The polypeptide is Coiled-coil domain-containing protein 169 (CCDC169) (Homo sapiens (Human)).